A 353-amino-acid chain; its full sequence is Quinolinate synthase (353 aa).

Iminosuccinate-binding residues include His47 and Ser68. [4Fe-4S] cluster is bound at residue Cys113. Residues 139 to 141 (YAN) and Ser156 each bind iminosuccinate. Cys200 contributes to the [4Fe-4S] cluster binding site. Iminosuccinate-binding positions include 226–228 (HPE) and Thr243. Residue Cys297 coordinates [4Fe-4S] cluster.

This sequence belongs to the quinolinate synthase family. Type 1 subfamily. [4Fe-4S] cluster serves as cofactor.

It localises to the cytoplasm. It catalyses the reaction iminosuccinate + dihydroxyacetone phosphate = quinolinate + phosphate + 2 H2O + H(+). It functions in the pathway cofactor biosynthesis; NAD(+) biosynthesis; quinolinate from iminoaspartate: step 1/1. In terms of biological role, catalyzes the condensation of iminoaspartate with dihydroxyacetone phosphate to form quinolinate. The chain is Quinolinate synthase from Pectobacterium atrosepticum (strain SCRI 1043 / ATCC BAA-672) (Erwinia carotovora subsp. atroseptica).